The sequence spans 331 residues: Adenosine deaminase (331 aa).

2 residues coordinate Zn(2+): His-12 and His-14. 3 residues coordinate substrate: His-14, Asp-16, and Gly-170. His-197 provides a ligand contact to Zn(2+). Glu-200 serves as the catalytic Proton donor. Asp-278 is a binding site for Zn(2+). Asp-279 serves as a coordination point for substrate.

This sequence belongs to the metallo-dependent hydrolases superfamily. Adenosine and AMP deaminases family. Adenosine deaminase subfamily. Zn(2+) is required as a cofactor.

The enzyme catalyses adenosine + H2O + H(+) = inosine + NH4(+). It carries out the reaction 2'-deoxyadenosine + H2O + H(+) = 2'-deoxyinosine + NH4(+). In terms of biological role, catalyzes the hydrolytic deamination of adenosine and 2-deoxyadenosine. The polypeptide is Adenosine deaminase (Shewanella baltica (strain OS223)).